The sequence spans 351 residues: Nicotinate-nucleotide--dimethylbenzimidazole phosphoribosyltransferase (351 aa).

Glutamate 317 acts as the Proton acceptor in catalysis.

This sequence belongs to the CobT family.

The enzyme catalyses 5,6-dimethylbenzimidazole + nicotinate beta-D-ribonucleotide = alpha-ribazole 5'-phosphate + nicotinate + H(+). The protein operates within nucleoside biosynthesis; alpha-ribazole biosynthesis; alpha-ribazole from 5,6-dimethylbenzimidazole: step 1/2. In terms of biological role, catalyzes the synthesis of alpha-ribazole-5'-phosphate from nicotinate mononucleotide (NAMN) and 5,6-dimethylbenzimidazole (DMB). This chain is Nicotinate-nucleotide--dimethylbenzimidazole phosphoribosyltransferase, found in Pseudomonas fluorescens (strain ATCC BAA-477 / NRRL B-23932 / Pf-5).